Consider the following 647-residue polypeptide: RalBP1-associated Eps domain-containing protein 2 (647 aa).

Residues 21–122 enclose the EH 1 domain; the sequence is EQQCYSELFA…RTESIKCELP (102 aa). The segment at 156–233 is disordered; that stretch reads EKNSFKRMDN…PSSEGPGAKP (78 aa). A compositionally biased stretch (basic and acidic residues) spans 158–170; the sequence is NSFKRMDNEDKQE. The span at 221-230 shows a compositional bias: low complexity; the sequence is PEGPSSEGPG. Ser239 carries the phosphoserine modification. One can recognise an EH 2 domain in the interval 268 to 359; that stretch reads QREYYVNQFR…LQPEYLQAAF (92 aa). In terms of domain architecture, EF-hand spans 301–336; the sequence is LSIPELSYIWELSDADCDGALTLSEFCAAFHLIVAR. Ca(2+)-binding residues include Asp314, Asp316, Asp318, and Glu325. The segment at 402–478 is disordered; the sequence is PTQDVTTADD…PRPQKTHSRA (77 aa). Residue Thr466 is modified to Phosphothreonine. Ser480 carries the post-translational modification Phosphoserine. A disordered region spans residues 492–568; the sequence is PAANSGLLPP…PENQTTESQE (77 aa). Residues 499-510 are compositionally biased toward pro residues; sequence LPPPPALPPRPC. Positions 501 to 647 are interaction with RALBP1; the sequence is PPPALPPRPC…LEQLRPVTVL (147 aa). Over residues 524–539 the composition is skewed to polar residues; the sequence is SQLNRAPSQAAESSPT. The tract at residues 548 to 647 is interaction with ASAP1; it reads PPSKPIRRKF…LEQLRPVTVL (100 aa). Residues 599–640 adopt a coiled-coil conformation; it reads IQTAIRKNKEANAVLARLNSELQQQLKEVHQERIALENQLEQ.

Interacts with EPN1. Interacts with EPS15 AND EPS15L1. Interacts with RALBP1; can form a ternary complex with activated Ral (RALA or RALB). Interacts with ASAP1; the interaction is direct and this complex can bind paxillin. Also forms a ternary complex with RALBP1 and ASAP1. Interacts with GRB2. Tyrosine-phosphorylated upon stimulation of cells with EGF. Phosphorylation on Tyr-residues induces its association with the EGF receptor probably indirectly through an adapter like GRB2.

It is found in the cytoplasm. Involved in ligand-dependent receptor mediated endocytosis of the EGF and insulin receptors as part of the Ral signaling pathway. By controlling growth factor receptors endocytosis may regulate cell survival. Through ASAP1 may regulate cell adhesion and migration. In Mus musculus (Mouse), this protein is RalBP1-associated Eps domain-containing protein 2 (Reps2).